The chain runs to 335 residues: Protein BRASSINAZOLE-RESISTANT 2 (335 aa).

Residues 1 to 19 (MTSDGATSTSAAAAAAAMA) show a composition bias toward low complexity. Disordered stretches follow at residues 1–40 (MTSD…RRRR), 85–122 (TYRK…FDSP), and 164–190 (PPLR…KPLP). Residues 22-103 (RKPSWREREN…PGDMAGSSSR (82 aa)) are required for DNA-binding. Residues 99 to 120 (GSSSRATPYSSHNQSPLSSTFD) show a composition bias toward polar residues. Residue threonine 175 is modified to Phosphothreonine. Residues 231–251 (HAPATIPECDESDSSTVDSGH) are PEST-like.

Belongs to the BZR/LAT61 family. In terms of assembly, interacts with ASK7/BIN2 through its C-terminal domain and with the bHLH transcription factors BIM1, BIM2 and BIM3 through its C- and N-terminal domains. Interacts (via N-terminus) with REF6 and ELF6. Interacts with MYB30. Interacts with IWS1. Interacts with ASHH2/SDG8. Binds to MYB56 when dephosphorylated in the nucleus of quiescent center (QC) cells. Binds to WRKY46, WRKY54 and WRKY70 to cooperatively regulate the expression of target genes. In terms of processing, phosphorylated by ASK7/BIN2. Phosphorylation increases protein degradation and/or interferes with the nuclear localization. Ubiquitously expressed in cotyledons, leaves, hypocotyls and roots.

The protein resides in the nucleus. The protein localises to the cytoplasm. Functionally, positive regulator of brassinosteroid (BR) signaling. Transcription factor that activates target gene expression by binding specifically to the DNA sequence 5'-CANNTG-3'(E box) through its N-terminal domain. Can bind individually to the promoter as a homodimer or synergistically as a heterodimer with BIM1, BIM2 or BIM3. The C-terminal domain is probably involved in transcriptional activation. Recruits the transcription elongation factor IWS1 to control BR-regulated gene expression. Forms a trimeric complex with IWS1 and ASHH2/SDG8 to regulate BR-regulated gene expression. Promotes quiescent center (QC) self-renewal by cell divisions in the primary root. Binds to the E-boxes of the BRAVO promoter to repress its expression. In Arabidopsis thaliana (Mouse-ear cress), this protein is Protein BRASSINAZOLE-RESISTANT 2.